The chain runs to 175 residues: uncharacterized protein (175 aa).

Disordered stretches follow at residues 68 to 112 (NKNN…DQPY) and 153 to 175 (PEKAKRDDSDDEDSMFPIKKLTT). Over residues 94–105 (DEQPMMPYQQPP) the composition is skewed to low complexity.

The protein belongs to the asfivirus H171R family.

Its subcellular location is the virion. This is an uncharacterized protein from African swine fever virus (isolate Tick/Malawi/Lil 20-1/1983) (ASFV).